A 282-amino-acid polypeptide reads, in one-letter code: MGIKKFKPTTNARRGMTQLDYSEITKKSPEKSLLESQSHTAGRNNYGRMTVRHRGGGNKRQYRIIDFKRIKDDVPATVKAIEYDPNRTANIALLVYADGVKSYIIAPKGLKVGDKVQSGSEADIKVGNALPLKDIPVGTVIHNIELKPGKGGQLVRSAGASAQLLGKEGKYVLIRLASSEVRMVLATNRATIGAVGNEEHELVNVGKAGRTRYAGQRPHVRGSVMNPNDHPHGGGEGKAPIGRPSPLSPWGKKTIGKKTRNKHNKSNKFIVRGRKRGRLGNI.

Disordered regions lie at residues 26–55 and 218–266; these read KKSP…RHRG and PHVR…HNKS. Over residues 34-43 the composition is skewed to polar residues; the sequence is LESQSHTAGR. Residues 254 to 266 show a composition bias toward basic residues; it reads TIGKKTRNKHNKS.

It belongs to the universal ribosomal protein uL2 family. In terms of assembly, part of the 50S ribosomal subunit. Forms a bridge to the 30S subunit in the 70S ribosome.

Its function is as follows. One of the primary rRNA binding proteins. Required for association of the 30S and 50S subunits to form the 70S ribosome, for tRNA binding and peptide bond formation. It has been suggested to have peptidyltransferase activity; this is somewhat controversial. Makes several contacts with the 16S rRNA in the 70S ribosome. This Pediococcus pentosaceus (strain ATCC 25745 / CCUG 21536 / LMG 10740 / 183-1w) protein is Large ribosomal subunit protein uL2.